The following is a 227-amino-acid chain: Phosphoglycolate phosphatase (227 aa).

D14 acts as the Nucleophile in catalysis. Mg(2+)-binding residues include D14, D16, and D177.

Belongs to the HAD-like hydrolase superfamily. CbbY/CbbZ/Gph/YieH family. The cofactor is Mg(2+).

The catalysed reaction is 2-phosphoglycolate + H2O = glycolate + phosphate. It participates in organic acid metabolism; glycolate biosynthesis; glycolate from 2-phosphoglycolate: step 1/1. In terms of biological role, specifically catalyzes the dephosphorylation of 2-phosphoglycolate. Is involved in the dissimilation of the intracellular 2-phosphoglycolate formed during the DNA repair of 3'-phosphoglycolate ends, a major class of DNA lesions induced by oxidative stress. The protein is Phosphoglycolate phosphatase of Thiobacillus denitrificans (strain ATCC 25259 / T1).